A 168-amino-acid polypeptide reads, in one-letter code: ATP synthase subunit b (168 aa).

Residues 9–29 (SIPFGTIAYTLFIFLLLLVML) traverse the membrane as a helical segment.

Belongs to the ATPase B chain family. As to quaternary structure, F-type ATPases have 2 components, F(1) - the catalytic core - and F(0) - the membrane proton channel. F(1) has five subunits: alpha(3), beta(3), gamma(1), delta(1), epsilon(1). F(0) has three main subunits: a(1), b(2) and c(10-14). The alpha and beta chains form an alternating ring which encloses part of the gamma chain. F(1) is attached to F(0) by a central stalk formed by the gamma and epsilon chains, while a peripheral stalk is formed by the delta and b chains.

It localises to the cell membrane. In terms of biological role, f(1)F(0) ATP synthase produces ATP from ADP in the presence of a proton or sodium gradient. F-type ATPases consist of two structural domains, F(1) containing the extramembraneous catalytic core and F(0) containing the membrane proton channel, linked together by a central stalk and a peripheral stalk. During catalysis, ATP synthesis in the catalytic domain of F(1) is coupled via a rotary mechanism of the central stalk subunits to proton translocation. Component of the F(0) channel, it forms part of the peripheral stalk, linking F(1) to F(0). This chain is ATP synthase subunit b, found in Bacillus mycoides (strain KBAB4) (Bacillus weihenstephanensis).